The following is a 456-amino-acid chain: Putative F-box/LRR-repeat protein At5g02700 (456 aa).

An F-box domain is found at 26 to 72 (ADFINYMPDDILHHILSFIPTDLAMRTSVLSRRWRHVWCETPCLDIT). LRR repeat units lie at residues 126-154 (VRDFTYSKTYRFPDIFYLSSSLKLLDVTL), 177-202 (FCQIPDESIHNILSGCPILESLTLDT), 206-224 (LERLDLSKSPNLRRLDINQ), 271-300 (LSPLTADGYQTMALEMLSKFHNVKRLTVGE), and 330-355 (FVRSVIPGISRLLQNSPGLKKLRPST).

The chain is Putative F-box/LRR-repeat protein At5g02700 from Arabidopsis thaliana (Mouse-ear cress).